The following is a 547-amino-acid chain: Chaperonin GroEL (547 aa).

Residues 30 to 33 (TLGP), K51, 87 to 91 (DGTTT), G415, 479 to 481 (DAA), and D495 contribute to the ATP site.

The protein belongs to the chaperonin (HSP60) family. In terms of assembly, forms a cylinder of 14 subunits composed of two heptameric rings stacked back-to-back. Interacts with the co-chaperonin GroES.

The protein resides in the cytoplasm. It catalyses the reaction ATP + H2O + a folded polypeptide = ADP + phosphate + an unfolded polypeptide.. Together with its co-chaperonin GroES, plays an essential role in assisting protein folding. The GroEL-GroES system forms a nano-cage that allows encapsulation of the non-native substrate proteins and provides a physical environment optimized to promote and accelerate protein folding. In Dichelobacter nodosus (strain VCS1703A), this protein is Chaperonin GroEL.